We begin with the raw amino-acid sequence, 316 residues long: MFDHTTVLLKETVDGLNIDPDGVYVDCTLGGAGHSEYLVQQLSDKGRLICFDQDMTAIENAKIRLAPYIERVTFIHSNFRYLKEELLAHGFEQVDGILYDLGVSSPQLDTPERGFSYHHDAPLDMRMDQTATLTAFEVVNQWAYEDLVRIFFRYGEEKFSKQVARKIEEARKSAPIETTGQLVELIKEGIPAAARRKGGHPAKRIFQAIRIAVNDELGAAEDSLVDAIDMINVGGRISVITFHSLEDRLCKTIFKEASSLPELPPNLPVIPDDMKPTLKLITRKPIVPSDEELEVNNRARSAKLRVVEKINDKGRE.

S-adenosyl-L-methionine is bound by residues Ala-32–His-34, Asp-52, Phe-79, Asp-100, and Gln-107.

The protein belongs to the methyltransferase superfamily. RsmH family.

It is found in the cytoplasm. It carries out the reaction cytidine(1402) in 16S rRNA + S-adenosyl-L-methionine = N(4)-methylcytidine(1402) in 16S rRNA + S-adenosyl-L-homocysteine + H(+). Its function is as follows. Specifically methylates the N4 position of cytidine in position 1402 (C1402) of 16S rRNA. This is Ribosomal RNA small subunit methyltransferase H from Lysinibacillus sphaericus (strain C3-41).